The sequence spans 892 residues: Bifunctional uridylyltransferase/uridylyl-removing enzyme (892 aa).

The interval 1 to 348 is uridylyltransferase; sequence MPNFTGNTRP…LVDAKVHVRP (348 aa). Positions 349–710 are uridylyl-removing; the sequence is INERFQARNG…RIHNQEPGTM (362 aa). Residues 467–589 form the HD domain; sequence VDEHTLFLIH…VGDERRLNHL (123 aa). ACT domains are found at residues 711–786 and 822–892; these read EVFI…LTQP and VMEL…YLER.

Belongs to the GlnD family. Mg(2+) is required as a cofactor.

The enzyme catalyses [protein-PII]-L-tyrosine + UTP = [protein-PII]-uridylyl-L-tyrosine + diphosphate. It carries out the reaction [protein-PII]-uridylyl-L-tyrosine + H2O = [protein-PII]-L-tyrosine + UMP + H(+). With respect to regulation, uridylyltransferase (UTase) activity is inhibited by glutamine, while glutamine activates uridylyl-removing (UR) activity. Functionally, modifies, by uridylylation and deuridylylation, the PII regulatory proteins (GlnB and homologs), in response to the nitrogen status of the cell that GlnD senses through the glutamine level. Under low glutamine levels, catalyzes the conversion of the PII proteins and UTP to PII-UMP and PPi, while under higher glutamine levels, GlnD hydrolyzes PII-UMP to PII and UMP (deuridylylation). Thus, controls uridylylation state and activity of the PII proteins, and plays an important role in the regulation of nitrogen assimilation and metabolism. In Nitrosococcus oceani (strain ATCC 19707 / BCRC 17464 / JCM 30415 / NCIMB 11848 / C-107), this protein is Bifunctional uridylyltransferase/uridylyl-removing enzyme.